The chain runs to 213 residues: KHG/KDPG aldolase (213 aa).

E45 functions as the Proton acceptor in the catalytic mechanism. Pyruvate-binding residues include R49, T73, and K133. Residue K133 is the Schiff-base intermediate with substrate of the active site.

This sequence belongs to the KHG/KDPG aldolase family. In terms of assembly, homotrimer.

The protein resides in the cytoplasm. It carries out the reaction 2-dehydro-3-deoxy-6-phospho-D-gluconate = D-glyceraldehyde 3-phosphate + pyruvate. The enzyme catalyses (4S)-4-hydroxy-2-oxoglutarate = glyoxylate + pyruvate. The protein operates within carbohydrate acid metabolism; 2-dehydro-3-deoxy-D-gluconate degradation; D-glyceraldehyde 3-phosphate and pyruvate from 2-dehydro-3-deoxy-D-gluconate: step 2/2. Its pathway is carbohydrate metabolism; glyoxylate and dicarboxylate metabolism. Its function is as follows. Involved in the degradation of glucose via the Entner-Doudoroff pathway. Catalyzes the reversible, stereospecific retro-aldol cleavage of 2-keto-3-deoxy-6-phosphogluconate (KDPG) to pyruvate and D-glyceraldehyde-3-phosphate. In addition to its KDPG aldolase activity, catalyzes the reversible cleavage of 2-keto-4-hydroxyglutarate (KHG) to glyoxylate and pyruvate. The enzyme is stereoselective for the S-enantiomer of KHG. Cleavage of KHG could serve in tricarboxylic acid (TCA) cycle regulation or, when operating in the reverse direction, in the detoxification of glyoxylate. The protein is KHG/KDPG aldolase (eda) of Escherichia coli O157:H7.